Reading from the N-terminus, the 275-residue chain is Glucosamine-6-phosphate deaminase 2 (275 aa).

Residue Asp-72 is the Proton acceptor; for enolization step of the active site. Positions 103 to 131 (NAHILDGNASDLQAECEDFERKIKEAGGI) form a coiled coil. Asp-141 (for ring-opening step) is an active-site residue. His-143 functions as the Proton acceptor; for ring-opening step in the catalytic mechanism. The active-site For ring-opening step is Glu-148.

The protein belongs to the glucosamine/galactosamine-6-phosphate isomerase family. In terms of assembly, homohexamer.

It localises to the cytoplasm. The catalysed reaction is alpha-D-glucosamine 6-phosphate + H2O = beta-D-fructose 6-phosphate + NH4(+). Catalyzes the reversible conversion of alpha-D-glucosamine 6-phosphate (GlcN-6P) into beta-D-fructose 6-phosphate (Fru-6P) and ammonium ion, a regulatory reaction step in de novo uridine diphosphate-N-acetyl-alpha-D-glucosamine (UDP-GlcNAc) biosynthesis via hexosamine pathway. The sequence is that of Glucosamine-6-phosphate deaminase 2 from Xenopus tropicalis (Western clawed frog).